We begin with the raw amino-acid sequence, 204 residues long: Guanylate kinase (204 aa).

Residues 5 to 184 form the Guanylate kinase-like domain; it reads GLLIVLSGPS…ACDKIKAIVL (180 aa). 12–19 lines the ATP pocket; sequence GPSGVGKG.

Belongs to the guanylate kinase family.

The protein resides in the cytoplasm. It carries out the reaction GMP + ATP = GDP + ADP. Essential for recycling GMP and indirectly, cGMP. The protein is Guanylate kinase (gmk) of Bacillus subtilis (strain 168).